The sequence spans 168 residues: Putative postmeiotic segregation increased 2-like protein 3 (168 aa).

A KRAB domain is found at 8-84; it reads VSFKDVAVDF…EGEFPCQHSP (77 aa).

This sequence belongs to the DNA mismatch repair MutL/HexB family.

The sequence is that of Putative postmeiotic segregation increased 2-like protein 3 (PMS2P3) from Homo sapiens (Human).